Reading from the N-terminus, the 381-residue chain is Alkanesulfonate monooxygenase (381 aa).

It belongs to the SsuD family. Homotetramer.

It catalyses the reaction an alkanesulfonate + FMNH2 + O2 = an aldehyde + FMN + sulfite + H2O + 2 H(+). Catalyzes the desulfonation of aliphatic sulfonates. This chain is Alkanesulfonate monooxygenase, found in Shigella flexneri.